The chain runs to 382 residues: Alkanesulfonate monooxygenase (382 aa).

The protein belongs to the SsuD family. In terms of assembly, homotetramer.

It catalyses the reaction an alkanesulfonate + FMNH2 + O2 = an aldehyde + FMN + sulfite + H2O + 2 H(+). Its function is as follows. Catalyzes the desulfonation of aliphatic sulfonates. The sequence is that of Alkanesulfonate monooxygenase from Buttiauxella sp. (strain PNBS).